A 198-amino-acid chain; its full sequence is Recombination protein RecR (198 aa).

The C4-type zinc finger occupies 57 to 72 (CAMCNTFTEHEVCETC). In terms of domain architecture, Toprim spans 80–175 (ALLCVVETPG…KVSRLARGVP (96 aa)).

The protein belongs to the RecR family.

Functionally, may play a role in DNA repair. It seems to be involved in an RecBC-independent recombinational process of DNA repair. It may act with RecF and RecO. This chain is Recombination protein RecR, found in Janthinobacterium sp. (strain Marseille) (Minibacterium massiliensis).